Consider the following 171-residue polypeptide: Small ribosomal subunit protein mS25 (171 aa).

The protein belongs to the mitochondrion-specific ribosomal protein mS25 family. As to quaternary structure, component of the mitochondrial ribosome small subunit (28S) which comprises a 12S rRNA and about 30 distinct proteins.

It is found in the mitochondrion. In Rattus norvegicus (Rat), this protein is Small ribosomal subunit protein mS25 (Mrps25).